We begin with the raw amino-acid sequence, 412 residues long: CinA-like protein (412 aa).

The protein belongs to the CinA family.

In Syntrophotalea carbinolica (strain DSM 2380 / NBRC 103641 / GraBd1) (Pelobacter carbinolicus), this protein is CinA-like protein.